A 290-amino-acid polypeptide reads, in one-letter code: 33 kDa chaperonin (290 aa).

2 disulfide bridges follow: C235-C237 and C268-C271.

The protein belongs to the HSP33 family. Under oxidizing conditions two disulfide bonds are formed involving the reactive cysteines. Under reducing conditions zinc is bound to the reactive cysteines and the protein is inactive.

It localises to the cytoplasm. Functionally, redox regulated molecular chaperone. Protects both thermally unfolding and oxidatively damaged proteins from irreversible aggregation. Plays an important role in the bacterial defense system toward oxidative stress. In Streptococcus equi subsp. zooepidemicus (strain MGCS10565), this protein is 33 kDa chaperonin.